The primary structure comprises 59 residues: MENIIVTQVKSSIGVKKEHKLTLHALGLRRTGQQRKHKVSPQLQGMLNSVRHLIKVEKA.

It belongs to the universal ribosomal protein uL30 family. In terms of assembly, part of the 50S ribosomal subunit.

In Leptospira interrogans serogroup Icterohaemorrhagiae serovar copenhageni (strain Fiocruz L1-130), this protein is Large ribosomal subunit protein uL30.